The following is a 150-amino-acid chain: Protein-arginine-phosphatase (150 aa).

Catalysis depends on Cys7, which acts as the Nucleophile. Position 8-13 (8-13) interacts with substrate; that stretch reads TGNTCR. Residue Arg13 is part of the active site. The active-site Proton donor/acceptor is Asp118.

Belongs to the low molecular weight phosphotyrosine protein phosphatase family.

It carries out the reaction N(omega)-phospho-L-arginyl-[protein] + H2O = L-arginyl-[protein] + phosphate. With respect to regulation, efficiently inhibited by Cu(2+) ion, Zn(2+) ion, sodium pyrophosphate and N-ethylmaleimide, while the addition of Mg(2+), Ca(2+) or Fe(3+) ions has minimal effect. Inhibited in a competitive manner by vanadate. Functionally, catalyzes the specific dephosphorylation of phosphoarginine residues in a large number of proteins. Counteracts the protein arginine kinase McsB in vivo. Can dephosphorylate CtsR-P; thus, can restore the DNA-binding ability of the CtsR repressor by reversing the McsB-mediated phosphorylation. Is the only active pArg phosphatase present in B.subtilis. Exhibits almost no activity against pSer, pThr, or pTyr peptides. Appears to play a role in B.subtilis stress resistance. Protein arginine phosphorylation has a physiologically important role and is involved in the regulation of many critical cellular processes, such as protein homeostasis, motility, competence, and stringent and stress responses, by regulating gene expression and protein activity. In Bacillus subtilis (strain 168), this protein is Protein-arginine-phosphatase (ywlE).